The sequence spans 284 residues: Acetyl-coenzyme A carboxylase carboxyl transferase subunit beta (284 aa).

Positions 24 to 284 constitute a CoA carboxyltransferase N-terminal domain; that stretch reads GLWYKSPTGK…LDLILNNEVR (261 aa).

This sequence belongs to the AccD/PCCB family. Acetyl-CoA carboxylase is a heterohexamer composed of biotin carboxyl carrier protein (AccB), biotin carboxylase (AccC) and two subunits each of ACCase subunit alpha (AccA) and ACCase subunit beta (AccD).

The protein localises to the cytoplasm. It carries out the reaction N(6)-carboxybiotinyl-L-lysyl-[protein] + acetyl-CoA = N(6)-biotinyl-L-lysyl-[protein] + malonyl-CoA. The protein operates within lipid metabolism; malonyl-CoA biosynthesis; malonyl-CoA from acetyl-CoA: step 1/1. Functionally, component of the acetyl coenzyme A carboxylase (ACC) complex. Biotin carboxylase (BC) catalyzes the carboxylation of biotin on its carrier protein (BCCP) and then the CO(2) group is transferred by the transcarboxylase to acetyl-CoA to form malonyl-CoA. In Flavobacterium psychrophilum (strain ATCC 49511 / DSM 21280 / CIP 103535 / JIP02/86), this protein is Acetyl-coenzyme A carboxylase carboxyl transferase subunit beta.